A 104-amino-acid polypeptide reads, in one-letter code: Large ribosomal subunit protein uL24 (104 aa).

Belongs to the universal ribosomal protein uL24 family. As to quaternary structure, part of the 50S ribosomal subunit.

Its function is as follows. One of two assembly initiator proteins, it binds directly to the 5'-end of the 23S rRNA, where it nucleates assembly of the 50S subunit. In terms of biological role, one of the proteins that surrounds the polypeptide exit tunnel on the outside of the subunit. The sequence is that of Large ribosomal subunit protein uL24 from Pseudomonas aeruginosa (strain LESB58).